A 149-amino-acid polypeptide reads, in one-letter code: Transcriptional repressor NrdR (149 aa).

A zinc finger lies at 3-34 (CPFCSAVDTKVIDSRLVGDGSQVRRRRQCLVC). Positions 49–139 (PRVVKSNGVR…VYRSFEDVRE (91 aa)) constitute an ATP-cone domain.

This sequence belongs to the NrdR family. The cofactor is Zn(2+).

Functionally, negatively regulates transcription of bacterial ribonucleotide reductase nrd genes and operons by binding to NrdR-boxes. The protein is Transcriptional repressor NrdR of Edwardsiella ictaluri (strain 93-146).